The sequence spans 762 residues: MWESESESHGGERGLVPVGGGGGSGRHEAALKNDGFVRRDRSWYVNSDIPSDLLVKVGDVNFYLHKYPMISRSGRMSRAVYESSAADEAEADAAAAVAVVEMGDLPGGAGSFELAARFSYGMAVDLTAANISGLRCAAEYLEMTEEMEEGNLIFKTEAFLSYVVLSSWRDSIAVLKSCEALSPWAENLQIVRRCSESIAWKACANPRGVRWAYTGAGAGSGGARGGPAAIRGGGGSGGTASPRWNVGGGGGGESKESSPSRQAVPPADWWFEDVSVLRIDHFVRVVTAIKVKGMRFDLIGAAITHYASKWLPGLTKDAPLGATHDEPWAQASAAGVGGGGLHMMIISGAGGGKDDVLAACSAPSREQRMVVESIISITPPQRDSVSCGFLLRLLRLAIMLRAAPALVTELEKRVGMQLEQAALADLLIPSYGGRAADTAYDVDLVQRLVEHFLVQEQTEMAVASSPGRGDPPPPPQPEYYSGRMPPSSAAAASASASTGGLNAKARVARLLDSYLSEVSRDRNLSLTKFQVLAESLPESARACDDGLYRAVDSYLKAHPTLTEHERKRLCRVMDCQKLSFDACMHAAQNERLPLRVVVQVLFTEQVKISNALASSSAALRSSSSAPGADAAPAMPTTRRQLLDGTPQSFQEGWAAAKKDINTLKFELESMKAKYLELQHEMDALQKQVDGRGGGAPSPAAAKIGKQQQQGTSASAWSSGWKKLGRLAKMSGADAAAGGGVAPPGGGEAAARKGPRRWRNSIS.

Positions 1–12 (MWESESESHGGE) are enriched in basic and acidic residues. Positions 1–29 (MWESESESHGGERGLVPVGGGGGSGRHEA) are disordered. The BTB domain maps to 51–128 (SDLLVKVGDV…SYGMAVDLTA (78 aa)). The segment covering 227-238 (PAAIRGGGGSGG) has biased composition (gly residues). Disordered regions lie at residues 227-264 (PAAI…RQAV), 460-495 (MAVA…ASAS), 687-718 (QVDG…AWSS), and 731-762 (GADA…NSIS). An NPH3 domain is found at 268-607 (DWWFEDVSVL…VQVLFTEQVK (340 aa)). Positions 654 to 691 (AAAKKDINTLKFELESMKAKYLELQHEMDALQKQVDGR) form a coiled coil. The segment covering 696–709 (PSPAAAKIGKQQQQ) has biased composition (low complexity). Positions 736–747 (AGGGVAPPGGGE) are enriched in gly residues. The segment covering 752–762 (KGPRRWRNSIS) has biased composition (basic residues).

Belongs to the NPH3 family.

It participates in protein modification; protein ubiquitination. In terms of biological role, may act as a substrate-specific adapter of an E3 ubiquitin-protein ligase complex (CUL3-RBX1-BTB) which mediates the ubiquitination and subsequent proteasomal degradation of target proteins. Plays a role as signal transduction component in coleoptile phototropism and lateral translocation of auxin. The sequence is that of Coleoptile phototropism protein 1 (CPT1) from Oryza sativa subsp. japonica (Rice).